We begin with the raw amino-acid sequence, 184 residues long: MEQSIRSIDGSRSLSNVGASLIDRESINQRALQLLQRNRRRRLLLNRSEDKARYIQPERSASSQQIHPPEHHISAHERITKARGTRYKPTDLALAEIRKYQRSTDLLISRMPFARLVKEVTDQFTTESEPLRWQSMAIMALQEASEAYLVGLLEHTNLLALHAKRITIMRKDMQLARRIRGQFI.

The interval 54-81 (YIQPERSASSQQIHPPEHHISAHERITK) is disordered. A compositionally biased stretch (basic and acidic residues) spans 68-80 (PPEHHISAHERIT). Residues 82-182 (ARGTRYKPTD…MQLARRIRGQ (101 aa)) form an H3-like region.

Belongs to the histone H3 family. Component of centromeric nucleosomes, where DNA is wrapped around a histone octamer core. The octamer contains two molecules each of H2A, H2B, CSE4/CENPA and H4 assembled in one CSE4-H4 heterotetramer and two H2A-H2B heterodimers. Interacts with the inner kinetochore. In terms of processing, ubiquitinated. Is degraded through ubiquitin-mediated proteolysis when not protected by its association to the kinetochore.

The protein localises to the nucleus. Its subcellular location is the chromosome. The protein resides in the centromere. Its function is as follows. Histone H3-like nucleosomal protein that is specifically found in centromeric nucleosomes. Replaces conventional H3 in the nucleosome core of centromeric chromatin that serves as an assembly site for the inner kinetochore. Required for recruitment and assembly of kinetochore proteins, mitotic progression and chromosome segregation. May serve as an epigenetic mark that propagates centromere identity through replication and cell division. This chain is Histone H3-like centromeric protein CSE4 (CSE4), found in Kluyveromyces lactis (strain ATCC 8585 / CBS 2359 / DSM 70799 / NBRC 1267 / NRRL Y-1140 / WM37) (Yeast).